The following is a 197-amino-acid chain: Adenylate kinase (197 aa).

Position 16–21 (16–21 (GAGKGT)) interacts with ATP. Positions 36–65 (STGDILRDHVARGTELGQQVKPILDAGHLV) are NMP. AMP is bound by residues Thr-37, Arg-42, 63–65 (HLV), 90–93 (GFPR), and Gln-97. The LID stretch occupies residues 131–147 (ERGNQAQARGEAVRSDD). Arg-132 serves as a coordination point for ATP. Positions 144 and 155 each coordinate AMP. Residue Gly-183 coordinates ATP.

Belongs to the adenylate kinase family. Monomer.

The protein resides in the cytoplasm. It catalyses the reaction AMP + ATP = 2 ADP. Its pathway is purine metabolism; AMP biosynthesis via salvage pathway; AMP from ADP: step 1/1. Catalyzes the reversible transfer of the terminal phosphate group between ATP and AMP. Plays an important role in cellular energy homeostasis and in adenine nucleotide metabolism. This Deinococcus deserti (strain DSM 17065 / CIP 109153 / LMG 22923 / VCD115) protein is Adenylate kinase.